A 145-amino-acid chain; its full sequence is Globin-1 (145 aa).

The Globin domain maps to 1–145; sequence GISADQAKAL…VIVPGMKAGY (145 aa). Heme b contacts are provided by His-63 and His-92.

This sequence belongs to the globin family. Monomer.

In Liolophura japonica (Chiton), this protein is Globin-1.